The following is a 914-amino-acid chain: Thyroid peroxidase (914 aa).

The N-terminal stretch at 1–31 (MRTLGAMAVMLVVMGTAIFLPFLLRSRDILG) is a signal peptide. Residues 32–834 (GKTMTSHVIS…TCIDSGRLPR (803 aa)) are Extracellular-facing. Asparagine 123 carries N-linked (GlcNAc...) asparagine glycosylation. A disulfide bond links cysteine 136 and cysteine 152. Aspartate 232 is a binding site for heme b. Histidine 233 acts as the Proton acceptor in catalysis. Ca(2+) is bound at residue aspartate 234. 2 cysteine pairs are disulfide-bonded: cysteine 253–cysteine 263 and cysteine 257–cysteine 278. Asparagine 271 and asparagine 299 each carry an N-linked (GlcNAc...) asparagine glycan. Positions 313, 315, 317, and 319 each coordinate Ca(2+). Asparagine 334 is a glycosylation site (N-linked (GlcNAc...) asparagine). Residues glutamate 387 and histidine 482 each coordinate heme b. Intrachain disulfides connect cysteine 586–cysteine 643, cysteine 684–cysteine 709, cysteine 730–cysteine 770, cysteine 756–cysteine 782, cysteine 788–cysteine 802, cysteine 796–cysteine 811, and cysteine 813–cysteine 826. N-linked (GlcNAc...) asparagine glycosylation is present at asparagine 603. The region spanning 728-783 (DKCVFPEKVDNGNFVHCEESGKLVLVYSCFHGYKLQGQEQVTCTQNGWDSEPPVCK) is the Sushi domain. Residues 784-827 (DVNECADLTHPPCHSSAKCKNTKGSFQCVCTDPYMLGEDEKTCI) enclose the EGF-like; calcium-binding domain. A helical transmembrane segment spans residues 835–859 (ASWVSIALGALLIGGLASLSWTVIC). Over 860–914 (RWTHADKKSTLLITERVTMESGFRKSQESGISPQKAEVQDAEQEPAYGSRVLLCE) the chain is Cytoplasmic. The tract at residues 882-907 (FRKSQESGISPQKAEVQDAEQEPAYG) is disordered.

It belongs to the peroxidase family. XPO subfamily. Interacts with DUOX1, DUOX2 and CYBA. Ca(2+) is required as a cofactor. It depends on heme b as a cofactor. Post-translationally, heme is covalently bound through a H(2)O(2)-dependent autocatalytic process. Heme insertion is important for the delivery of protein at the cell surface. Cleaved in its N-terminal part.

The protein localises to the membrane. The catalysed reaction is 2 iodide + H2O2 + 2 H(+) = diiodine + 2 H2O. It carries out the reaction [thyroglobulin]-L-tyrosine + iodide + H2O2 + H(+) = [thyroglobulin]-3-iodo-L-tyrosine + 2 H2O. It catalyses the reaction [thyroglobulin]-3-iodo-L-tyrosine + iodide + H2O2 + H(+) = [thyroglobulin]-3,5-diiodo-L-tyrosine + 2 H2O. The enzyme catalyses 2 [thyroglobulin]-3,5-diiodo-L-tyrosine + H2O2 = [thyroglobulin]-L-thyroxine + [thyroglobulin]-dehydroalanine + 2 H2O. The catalysed reaction is [thyroglobulin]-3-iodo-L-tyrosine + [thyroglobulin]-3,5-diiodo-L-tyrosine + H2O2 = [thyroglobulin]-3,3',5-triiodo-L-thyronine + [thyroglobulin]-dehydroalanine + 2 H2O. Its pathway is hormone biosynthesis; thyroid hormone biosynthesis. Functionally, iodination and coupling of the hormonogenic tyrosines in thyroglobulin to yield the thyroid hormones T(3) and T(4). The polypeptide is Thyroid peroxidase (Tpo) (Rattus norvegicus (Rat)).